We begin with the raw amino-acid sequence, 381 residues long: Pentatricopeptide repeat-containing protein 2, mitochondrial (381 aa).

Residues 157 to 191 (DTTSFNITIDMLFNKQLYESGLEVVGEMKKQGVSL) form a PPR repeat.

This sequence belongs to the PTCD2 family.

The protein resides in the mitochondrion. Its function is as follows. Involved in mitochondrial RNA maturation and mitochondrial respiratory chain function. The polypeptide is Pentatricopeptide repeat-containing protein 2, mitochondrial (ptcd2) (Danio rerio (Zebrafish)).